We begin with the raw amino-acid sequence, 489 residues long: Zeta-carotene desaturase (489 aa).

Belongs to the zeta carotene desaturase family. It depends on NAD(+) as a cofactor. The cofactor is NADP(+). FAD serves as cofactor.

The enzyme catalyses 9,9'-di-cis-zeta-carotene + 2 a quinone = 7,7',9,9'-tetra-cis-lycopene + 2 a quinol. It participates in carotenoid biosynthesis; lycopene biosynthesis. Catalyzes the conversion of zeta-carotene to lycopene via the intermediary of neurosporene. It carries out two consecutive desaturations (introduction of double bonds) at positions C-7 and C-7'. The sequence is that of Zeta-carotene desaturase (crtQ) from Synechocystis sp. (strain ATCC 27184 / PCC 6803 / Kazusa).